We begin with the raw amino-acid sequence, 197 residues long: MSLSIDVTSLPSISSSIFKNESSSTTSTLSGKSIGRSEQYISPDAEAFNKYMLSKSPEDIGPSDSASNDPLTSFSIRSNAVKTNADAGVSMDSSTQSRPSSNVGCDQLDFSLTKGINVSANLDSCISISTDHKKEKSKKDKSRKYYPKIEADSDSEDYVLDDSDSDDGKCKNCKYKKKYFVLRMRMKQVAMQLIEDL.

Over residues 17-30 (IFKNESSSTTSTLS) the composition is skewed to low complexity. 2 disordered regions span residues 17 to 37 (IFKN…IGRS) and 53 to 72 (LSKS…DPLT). Residue serine 67 is modified to Phosphoserine; by host CK1. Mg(2+) is bound at residue aspartate 92. 4 positions are modified to phosphoserine; by host: serine 153, serine 155, serine 163, and serine 165.

It belongs to the rotavirus NSP5 family. Homodimer. Interacts with VP1. Interacts with VP2. Interacts with NSP2; this interaction leads to up-regulation of NSP5 hyperphosphorylation and formation of virus factories. Interacts with NSP6. Participates in the selective exclusion of host proteins from stress granules (SG) and P bodies (PB). Also participates in the sequestration of these remodeled organelles in viral factories. Mg(2+) is required as a cofactor. Post-translationally, O-glycosylated. Hyperphosphorylated on serine residues, when in dimeric form. Phosphorylation by host CK1 is required for the hyperphosphorylation of NSP5 dimer.

It localises to the host cytoplasm. Its function is as follows. Plays an essential role in the viral genome replication. Participates, together with NSP2, in the formation of viral factories (viroplasms), which are large inclusions in the host cytoplasm where replication intermediates are assembled and viral RNA replication takes place. Orchestrates the recruitment of viroplasmic proteins such as capsid proteins to these factories. Participates in the selective exclusion of host proteins from stress granules (SG) and P bodies (PB). Also participates in the sequestration of these remodeled organelles in viral factories. This chain is Non-structural protein 5, found in Rotavirus A (strain RVA/Human/United Kingdom/ST3/1975/G4P2A[6]) (RV-A).